The sequence spans 263 residues: Indolethylamine N-methyltransferase (263 aa).

Residue Lys13 is modified to N6-succinyllysine. S-adenosyl-L-methionine contacts are provided by residues Tyr20, Tyr25, 63-64 (GS), Tyr69, Asp85, and Asn90. Lys96 carries the post-translational modification N6-succinyllysine. S-adenosyl-L-methionine-binding positions include 142–143 (DA) and Leu163.

Belongs to the class I-like SAM-binding methyltransferase superfamily. NNMT/PNMT/TEMT family. Monomer. Highly expressed in lung, also detected in liver and at very low levels in brain.

The protein localises to the cytoplasm. It catalyses the reaction a tertiary amine + S-adenosyl-L-methionine = a methylated tertiary amine + S-adenosyl-L-homocysteine + H(+). It carries out the reaction a secondary amine + S-adenosyl-L-methionine = a methylated secondary amine + S-adenosyl-L-homocysteine + H(+). The enzyme catalyses a primary amine + S-adenosyl-L-methionine = a methylated primary amine + S-adenosyl-L-homocysteine + H(+). The catalysed reaction is dimethyl sulfide + S-adenosyl-L-methionine = trimethylsulfonium + S-adenosyl-L-homocysteine. In terms of biological role, catalyzes the N-methylation of tryptamine and structurally related compounds. Functions as a thioether S-methyltransferase and is active with a variety of thioethers and the corresponding selenium and tellurium compounds, including 3-methylthiopropionaldehyde, dimethyl selenide, dimethyl telluride, 2-methylthioethylamine, 2-methylthioethanol, methyl-n-propyl sulfide and diethyl sulfide. Plays an important role in the detoxification of selenium compounds. The chain is Indolethylamine N-methyltransferase (INMT) from Oryctolagus cuniculus (Rabbit).